Here is a 314-residue protein sequence, read N- to C-terminus: Polyamine aminopropyltransferase (314 aa).

The region spanning 4–241 is the PABS domain; it reads GMYFFEHVTP…LNFGFLLASD (238 aa). Q33 provides a ligand contact to S-methyl-5'-thioadenosine. The spermidine site is built by H64 and E88. Residues D108 and 140-141 each bind S-methyl-5'-thioadenosine; that span reads DA. The active-site Proton acceptor is the D158. P168 is an S-methyl-5'-thioadenosine binding site.

This sequence belongs to the spermidine/spermine synthase family. As to quaternary structure, homodimer or homotetramer.

The protein localises to the cytoplasm. It carries out the reaction S-adenosyl 3-(methylsulfanyl)propylamine + putrescine = S-methyl-5'-thioadenosine + spermidine + H(+). Its pathway is amine and polyamine biosynthesis; spermidine biosynthesis; spermidine from putrescine: step 1/1. Its function is as follows. Catalyzes the irreversible transfer of a propylamine group from the amino donor S-adenosylmethioninamine (decarboxy-AdoMet) to putrescine (1,4-diaminobutane) to yield spermidine. The chain is Polyamine aminopropyltransferase from Thermus thermophilus (strain ATCC BAA-163 / DSM 7039 / HB27).